A 341-amino-acid chain; its full sequence is Uroporphyrinogen decarboxylase (341 aa).

Residues 25–29 (RQAGR), F44, D74, Y151, S206, and H318 each bind substrate.

The protein belongs to the uroporphyrinogen decarboxylase family. In terms of assembly, homodimer.

The protein localises to the cytoplasm. It carries out the reaction uroporphyrinogen III + 4 H(+) = coproporphyrinogen III + 4 CO2. Its pathway is porphyrin-containing compound metabolism; protoporphyrin-IX biosynthesis; coproporphyrinogen-III from 5-aminolevulinate: step 4/4. In terms of biological role, catalyzes the decarboxylation of four acetate groups of uroporphyrinogen-III to yield coproporphyrinogen-III. The protein is Uroporphyrinogen decarboxylase of Flavobacterium johnsoniae (strain ATCC 17061 / DSM 2064 / JCM 8514 / BCRC 14874 / CCUG 350202 / NBRC 14942 / NCIMB 11054 / UW101) (Cytophaga johnsonae).